We begin with the raw amino-acid sequence, 77 residues long: Large ribosomal subunit protein bL28 (77 aa).

This sequence belongs to the bacterial ribosomal protein bL28 family.

This is Large ribosomal subunit protein bL28 from Acidovorax ebreus (strain TPSY) (Diaphorobacter sp. (strain TPSY)).